A 296-amino-acid chain; its full sequence is Solute carrier protein FPSE_08119 (296 aa).

3 helical membrane passes run 12-32 (GLAA…GMVA), 122-142 (AGVG…VILI), and 219-239 (AVAA…FDFV). Solcar repeat units lie at residues 16 to 102 (LQTA…FEKE), 114 to 205 (LSFG…AKNQ), and 213 to 296 (SPPV…GPHS).

The protein belongs to the mitochondrial carrier (TC 2.A.29) family.

The protein resides in the mitochondrion inner membrane. Its function is as follows. Solute carrier protein; part of the Fusarium detoxification of benzoxazolinone cluster involved in the degradation of benzoxazolinones produced by the host plant. Maize, wheat, and rye produce the 2 benzoxazinone phytoanticipins 2,4-dihy-droxy-7-methoxy-1,4-benzoxazin-3-one (DIMBOA) and 2,4-dihydroxy-1,4-benzoxazin-3-one (DIBOA) that, due to their inherent instability once released, spontaneously degrade to the more stable corresponding benzoxazolinones, 6-methoxy-2-benzoxazolinone (MBOA) and 2-benzoxazolinone (BOA), respectively. This is Solute carrier protein FPSE_08119 from Fusarium pseudograminearum (strain CS3096) (Wheat and barley crown-rot fungus).